The primary structure comprises 425 residues: Multifunctional CCA protein (425 aa).

Gly8 and Arg11 together coordinate ATP. Positions 8 and 11 each coordinate CTP. 2 residues coordinate Mg(2+): Asp21 and Asp23. ATP is bound by residues Arg91, Arg141, and Arg144. Positions 91, 141, and 144 each coordinate CTP. Residues 230–331 (TGVHLMMVLD…VRLLERCDAI (102 aa)) form the HD domain.

Belongs to the tRNA nucleotidyltransferase/poly(A) polymerase family. Bacterial CCA-adding enzyme type 1 subfamily. In terms of assembly, monomer. Can also form homodimers and oligomers. The cofactor is Mg(2+). Ni(2+) serves as cofactor.

The catalysed reaction is a tRNA precursor + 2 CTP + ATP = a tRNA with a 3' CCA end + 3 diphosphate. It carries out the reaction a tRNA with a 3' CCA end + 2 CTP + ATP = a tRNA with a 3' CCACCA end + 3 diphosphate. In terms of biological role, catalyzes the addition and repair of the essential 3'-terminal CCA sequence in tRNAs without using a nucleic acid template. Adds these three nucleotides in the order of C, C, and A to the tRNA nucleotide-73, using CTP and ATP as substrates and producing inorganic pyrophosphate. tRNA 3'-terminal CCA addition is required both for tRNA processing and repair. Also involved in tRNA surveillance by mediating tandem CCA addition to generate a CCACCA at the 3' terminus of unstable tRNAs. While stable tRNAs receive only 3'-terminal CCA, unstable tRNAs are marked with CCACCA and rapidly degraded. This chain is Multifunctional CCA protein, found in Acidovorax sp. (strain JS42).